Here is a 305-residue protein sequence, read N- to C-terminus: DNA-directed RNA polymerase 35 kDa subunit (305 aa).

Belongs to the poxviridae DNA-directed RNA polymerase 35 kDa subunit family. As to quaternary structure, the DNA-dependent RNA polymerase used for intermediate and late genes expression consists of eight subunits 147 kDa, 133 kDa, 35 kDa, 30 kDa, 22 kDa, 19 kDa, 18 kDa and 7 kDa totalling more than 500 kDa in mass. The same holoenzyme, with the addition of the transcription-specificity factor RAP94, is used for early gene expression.

The protein resides in the virion. It carries out the reaction RNA(n) + a ribonucleoside 5'-triphosphate = RNA(n+1) + diphosphate. In terms of biological role, part of the DNA-dependent RNA polymerase which catalyzes the transcription of viral DNA into RNA using the four ribonucleoside triphosphates as substrates. Responsible for the transcription of early, intermediate and late genes. DNA-dependent RNA polymerase associates with the early transcription factor (ETF), itself composed of D6 and A7, thereby allowing the early genes transcription. Late transcription, and probably also intermediate transcription, require newly synthesized RNA polymerase. The chain is DNA-directed RNA polymerase 35 kDa subunit (RPO35) from Homo sapiens (Human).